Reading from the N-terminus, the 205-residue chain is Outer-membrane lipoprotein LolB (205 aa).

The N-terminal stretch at 1-17 is a signal peptide; that stretch reads MRLRLFLAASALALLSG. Cys18 carries the N-palmitoyl cysteine lipid modification. Residue Cys18 is the site of S-diacylglycerol cysteine attachment.

It belongs to the LolB family. In terms of assembly, monomer.

It localises to the cell outer membrane. Plays a critical role in the incorporation of lipoproteins in the outer membrane after they are released by the LolA protein. In Pseudomonas paraeruginosa (strain DSM 24068 / PA7) (Pseudomonas aeruginosa (strain PA7)), this protein is Outer-membrane lipoprotein LolB.